Here is a 219-residue protein sequence, read N- to C-terminus: Ribose-5-phosphate isomerase A (219 aa).

Residues 28–31 (SGST), 81–84 (DGAD), and 94–97 (KGGG) each bind substrate. Residue Glu-103 is the Proton acceptor of the active site. Lys-121 is a binding site for substrate.

Belongs to the ribose 5-phosphate isomerase family. As to quaternary structure, homodimer.

It catalyses the reaction aldehydo-D-ribose 5-phosphate = D-ribulose 5-phosphate. The protein operates within carbohydrate degradation; pentose phosphate pathway; D-ribose 5-phosphate from D-ribulose 5-phosphate (non-oxidative stage): step 1/1. Catalyzes the reversible conversion of ribose-5-phosphate to ribulose 5-phosphate. This chain is Ribose-5-phosphate isomerase A, found in Actinobacillus pleuropneumoniae serotype 3 (strain JL03).